The sequence spans 228 residues: Response regulator MprA (228 aa).

Positions 2–116 constitute a Response regulatory domain; that stretch reads RILVVDDDRA…ELLARMRALL (115 aa). Residue D46 is modified to 4-aspartylphosphate. The ompR/PhoB-type DNA-binding region spans 127 to 225; sequence SVAMTFSDLT…VRGVGYVLRE (99 aa).

Phosphorylated and dephosphorylated by MprB.

It is found in the cytoplasm. Member of the two-component regulatory system MprB/MprA which contributes to maintaining a balance among several systems involved in stress resistance and is required for establishment and maintenance of persistent infection in the host. Functions as a transcriptional regulator that recognizes a 19-bp nucleotide motif comprizing two loosely conserved 8-bp direct DNA-binding motif repeats separated by a 3-bp spacer region. The polypeptide is Response regulator MprA (mprA) (Mycobacterium avium (strain 104)).